The sequence spans 165 residues: Neurotrophin-3 (165 aa).

A signal peptide spans Ile1 to Ser3. Positions Thr4–Arg119 are excised as a propeptide. Asn112 is a glycosylation site (N-linked (GlcNAc...) asparagine).

This sequence belongs to the NGF-beta family.

The protein resides in the secreted. Functionally, seems to promote the survival of visceral and proprioceptive sensory neurons. In Morelia spilota (Carpet python), this protein is Neurotrophin-3 (NTF3).